The following is a 30-amino-acid chain: Acidic phospholipase A2 homolog cannitoxin gamma chain (30 aa).

As to quaternary structure, heterotrimer of alpha, beta, and gamma chains; non-covalently linked. Glycosylated. In terms of tissue distribution, expressed by the venom gland.

It localises to the secreted. In terms of biological role, heterotrimer: Snake venom phospholipase A2 (PLA2) heterotrimer that acts as a potent presynaptic neurotoxin by blocking synaptic transmission and synaptic vesicle recycling. Enzymatic activity is essential for the neurotoxic effects. May act by binding in a calcium-dependent fashion to neurotonal pentraxin-1 (NPTX1) and neurotonal pentraxin-2 (NPTX2), but not to neuronal pentraxin receptor (NPTXR). Also binds to taipoxin-associated calcium binding protein 49 (RCN2), a protein localized in the lumen of endoplasmic reticulum. Functionally, monomer (gamma chain): Snake venom phospholipase A2 homolog that is neither toxic nor enzymatically active. Does not bind calcium. This chain is Acidic phospholipase A2 homolog cannitoxin gamma chain, found in Oxyuranus scutellatus canni (Papuan taipan).